Here is a 363-residue protein sequence, read N- to C-terminus: Circumsporozoite protein (363 aa).

The N-terminal stretch at 1 to 22 is a signal peptide; the sequence is MKNFILLAVSSILLVDLLPTHF. Residues 48 to 57 show a composition bias toward polar residues; the sequence is GAQQVRQSAS. Residues 48–278 form a disordered region; the sequence is GAQQVRQSAS…GQNNQGANAP (231 aa). The span at 61–96 shows a compositional bias: basic and acidic residues; sequence GLGEKPKEGADKEKKKEKGKEKEEEPKKPNENKLKQ. The segment at 80 to 88 is required for the binding to heparan sulfate proteoglycans (HSPGs) on the surface of host hepatocytes; that stretch reads KEKEEEPKK. Positions 93 to 97 are region I; contains the proteolytic cleavage site; it reads KLKQP. Residues 98-109 form a 1; approximate repeat; that stretch reads NEGQPQAQGDGA. The interval 98 to 241 is 12 X 12 AA approximate tandem repeats of N-A-G-Q-P-Q-A-Q-G-D-G-A; that stretch reads NEGQPQAQGD…GQPQAQGDGA (144 aa). 11 repeat units span residues 110-121, 122-133, 134-145, 146-157, 158-169, 170-181, 182-193, 194-205, 206-217, 218-229, and 230-241. Residues 248–259 are compositionally biased toward gly residues; that stretch reads RNGGGAPAGGNE. Over residues 260–277 the composition is skewed to low complexity; sequence GNKQAGKGQGQNNQGANA. Positions 289 to 341 constitute a TSP type-1 domain; the sequence is KIRSSVTTEWTPCSVTCGNGVRIRRKAHAGNKKAEDLTMDDLEVEACVMDKCA. 2 disulfides stabilise this stretch: cysteine 301-cysteine 335 and cysteine 305-cysteine 340. The O-linked (Fuc) threonine glycan is linked to threonine 304. Residue cysteine 340 is the site of GPI-anchor amidated cysteine attachment. Residues 341–363 constitute a propeptide, removed in mature form; that stretch reads AGIFNVVSNSLGLVILLVLALFN.

This sequence belongs to the plasmodium circumsporozoite protein family. Post-translationally, during host cell invasion, proteolytically cleaved at the cell membrane in the region I by a papain-like cysteine protease of parasite origin. Cleavage is triggered by the sporozoite contact with highly sulfated heparan sulfate proteoglycans (HSPGs) present on the host hepatocyte cell surface. Cleavage exposes the TSP type-1 (TSR) domain and is required for productive invasion of host hepatocytes but not for adhesion to the host cell membrane. Cleavage is dispensable for sporozoite development in the oocyst, motility and for traversal of host and vector cells. In terms of processing, O-glycosylated; maybe by POFUT2.

The protein localises to the cell membrane. Its subcellular location is the cytoplasm. Functionally, essential sporozoite protein. In the mosquito vector, required for sporozoite development in the oocyst, migration through the vector hemolymph and entry into the vector salivary glands. In the vertebrate host, required for sporozoite migration through the host dermis and infection of host hepatocytes. Binds to highly sulfated heparan sulfate proteoglycans (HSPGs) on the surface of host hepatocytes. In terms of biological role, in the vertebrate host, binds to highly sulfated heparan sulfate proteoglycans (HSPGs) on the surface of host hepatocytes and is required for sporozoite invasion of the host hepatocytes. This is Circumsporozoite protein from Plasmodium knowlesi (strain H).